The primary structure comprises 481 residues: FBD-associated F-box protein At5g44490 (481 aa).

One can recognise an F-box domain in the interval 17–64 (DLMSKLTDALISQVLFYLPTKEAVSTSVLSSRWKSVWLLIPDLDLNSS). Residues 370 to 423 (EKSVSFSSVPQCLLSSLEFVEIKISRFGIISLGIGIARFFVENSVVLKKLVVHS) enclose the FBD domain.

This is FBD-associated F-box protein At5g44490 from Arabidopsis thaliana (Mouse-ear cress).